The sequence spans 435 residues: ATP-dependent protease ATPase subunit HslU (435 aa).

ATP-binding positions include Ile18, 60-65 (GVGKTE), Asp248, Glu313, and Arg385.

The protein belongs to the ClpX chaperone family. HslU subfamily. In terms of assembly, a double ring-shaped homohexamer of HslV is capped on each side by a ring-shaped HslU homohexamer. The assembly of the HslU/HslV complex is dependent on binding of ATP.

Its subcellular location is the cytoplasm. In terms of biological role, ATPase subunit of a proteasome-like degradation complex; this subunit has chaperone activity. The binding of ATP and its subsequent hydrolysis by HslU are essential for unfolding of protein substrates subsequently hydrolyzed by HslV. HslU recognizes the N-terminal part of its protein substrates and unfolds these before they are guided to HslV for hydrolysis. This Agrobacterium fabrum (strain C58 / ATCC 33970) (Agrobacterium tumefaciens (strain C58)) protein is ATP-dependent protease ATPase subunit HslU.